A 281-amino-acid chain; its full sequence is 4-deoxy-L-threo-5-hexosulose-uronate ketol-isomerase (281 aa).

Positions 198, 200, 205, and 248 each coordinate Zn(2+).

The protein belongs to the KduI family. Zn(2+) serves as cofactor.

It carries out the reaction 5-dehydro-4-deoxy-D-glucuronate = 3-deoxy-D-glycero-2,5-hexodiulosonate. It functions in the pathway glycan metabolism; pectin degradation; 2-dehydro-3-deoxy-D-gluconate from pectin: step 4/5. Functionally, catalyzes the isomerization of 5-dehydro-4-deoxy-D-glucuronate to 3-deoxy-D-glycero-2,5-hexodiulosonate. The protein is 4-deoxy-L-threo-5-hexosulose-uronate ketol-isomerase of Levilactobacillus brevis (strain ATCC 367 / BCRC 12310 / CIP 105137 / JCM 1170 / LMG 11437 / NCIMB 947 / NCTC 947) (Lactobacillus brevis).